A 134-amino-acid polypeptide reads, in one-letter code: Large ribosomal subunit protein uL16c (134 aa).

The protein belongs to the universal ribosomal protein uL16 family. Part of the 50S ribosomal subunit.

Its subcellular location is the plastid. The protein localises to the chloroplast. The sequence is that of Large ribosomal subunit protein uL16c from Pinus thunbergii (Japanese black pine).